A 694-amino-acid chain; its full sequence is Polyribonucleotide nucleotidyltransferase (694 aa).

D486 and D492 together coordinate Mg(2+). The KH domain maps to 553 to 612; the sequence is PRIETMQIKPTKIASVIGPGGKQIRQIIEETGVQIDVNDLGVVSISASSASAINKAKEII. The 69-residue stretch at 622-690 folds into the S1 motif domain; sequence GKTYRGRVTS…EKGQLKLSHK (69 aa).

Belongs to the polyribonucleotide nucleotidyltransferase family. Mg(2+) serves as cofactor.

The protein resides in the cytoplasm. The catalysed reaction is RNA(n+1) + phosphate = RNA(n) + a ribonucleoside 5'-diphosphate. Functionally, involved in mRNA degradation. Catalyzes the phosphorolysis of single-stranded polyribonucleotides processively in the 3'- to 5'-direction. The sequence is that of Polyribonucleotide nucleotidyltransferase from Chlamydia pneumoniae (Chlamydophila pneumoniae).